A 254-amino-acid chain; its full sequence is Arginine transport ATP-binding protein ArgV (254 aa).

The ABC transporter domain maps to Ile6 to Leu250. Gly38 to Ser45 is a binding site for ATP.

Belongs to the ABC transporter superfamily. As to quaternary structure, the complex is probably composed of two ATP-binding proteins (ArgV), two transmembrane proteins (ArgU) and a solute-binding protein (ArgT).

The protein localises to the cell membrane. It carries out the reaction a polar amino acid(out) + ATP + H2O = a polar amino acid(in) + ADP + phosphate + H(+). The catalysed reaction is L-arginine(out) + ATP + H2O = L-arginine(in) + ADP + phosphate + H(+). Its function is as follows. Part of the ABC transporter complex ArgTUV involved in L-arginine import. May also transport L-citrulline. Probably responsible for energy coupling to the transport system. In Corynebacterium glutamicum (strain ATCC 13032 / DSM 20300 / JCM 1318 / BCRC 11384 / CCUG 27702 / LMG 3730 / NBRC 12168 / NCIMB 10025 / NRRL B-2784 / 534), this protein is Arginine transport ATP-binding protein ArgV.